A 248-amino-acid chain; its full sequence is MLAIISSAKTLNFEKLAPKTELTIPVFLTLTNKLLATLQSYSENQLSKIMNISAKLAHINKERFKDFDNQESKAAIFAYAGDVFNNIHIEKLTNHALNFLQSHLLIISGLYGVLKPLDTIKPYRLEMATKLNEINLTNFWQDEVTNYINKILAKQENKYLLNLASQEYSSVINPNKLKYQLVNVHFKENRNGKLSTIGINAKKARGAMVKVIANNLIDSPELLKNFSYLGYAFSTKHSSDNELVFIKS.

This sequence belongs to the UPF0246 family.

This chain is UPF0246 protein A1G_03985, found in Rickettsia rickettsii (strain Sheila Smith).